Reading from the N-terminus, the 710-residue chain is F-box/WD repeat-containing protein 7 (710 aa).

Residues 1–158 are disordered; that stretch reads MNQELLSVGS…CSSVSDLPAH (158 aa). S26 is subject to Phosphoserine. Residues 46 to 55 are compositionally biased toward basic and acidic residues; that stretch reads RHQEEEHTAR. Polar residues predominate over residues 69–84; sequence QNDTQQGQVEENNNRF. The segment covering 87–132 has biased composition (acidic residues); that stretch reads VDEDSSGNQEEQEEDEEHAGEQEEEEEEEEEEEEMDQESDDFDPSD. The segment covering 133 to 142 has biased composition (basic and acidic residues); that stretch reads DSSREDEHTH. Residues 143-158 are compositionally biased toward polar residues; it reads NSNVTNCSSVSDLPAH. T208 carries the post-translational modification Phosphothreonine. S230 carries the phosphoserine; by SGK1 modification. An F-box domain is found at 281–327; that stretch reads RDFISLLPKELALYVLSFLEPKDLLQAAQTCRYWRILAEDNLLWREK. WD repeat units lie at residues 381–421, 423–459, 462–501, 503–539, 542–581, 583–621, and 625–662; these read GHDD…RTLV, HTGGVWSSQMRDNIIISGSTDRTLKVWNAETGECIHT, GHTSTVRCMHLHEKRVVSGSRDATLRVWDIETGQCLHVLM, HVAAVRCVQYDGRRVVSGAYDFMVKVWDPETETCLHT, GHTNRVYSLQFDGIHVVSGSLDTSIRVWDVETGNCIHTLT, HQSLTSGMELKDNILVSGNADSTVKIWDIKTGQCLQTLQ, and KHQSAVTCLQFNKNFVITSSDDGTVKLWDLKTGEFIRN.

As to quaternary structure, homodimer; homodimerization plays a role in substrate binding and/or ubiquitination and degradation. Component of the SCF(FBXW7) complex consisting of CUL1, RBX1, SKP1 and FBXW7. Interacts (via F-box domain) with SKP1. Interacts (via F-box domain) with pseudophosphatase STYX; the interaction is direct and prevents FBXW7 interaction with SKP1. Interacts with cyclin-E (CCNE1 or CCNE2). Interacts with PSEN1. Forms a trimeric complex with NOTCH1 and SGK1. Interacts with NOTCH1 intracellular domain/NICD and NOTCH4 intracellular domain/NICD. Interacts with NOTCH2 intracellular domain (N2ICD). Interacts with MYC (when phosphorylated). Interacts with USP28, counteracting ubiquitination of MYC. Interacts (when phosphorylated at Thr-208) with PIN1, disrupting FBXW7 dimerization and promoting FBXW7 autoubiquitination and degradation. Interacts with UBE2QL1. Interacts with FAM83D; promotes FBXW7 degradation. Interacts with MYCN; FBXW7 competes with AURKA for binding to unphosphorylated MYCN but not for binding to phosphorylated MYCN. Interacts with JUN. Found in a complex with JUN and PRR7. Interacts with JUN and PRR7; the interaction inhibits ubiquitination-mediated JUN degradation, promoting its phosphorylation and transcriptional activity. Interacts with NFE2L1. Interacts with NR1D1. Interacts with RICTOR; mediates RICTOR ubiquitination and degradation. Interacts with USP38, counteracting ubiquitination of MYC. Phosphorylation at Thr-208 promotes interaction with PIN1, leading to disrupt FBXW7 dimerization and promoting FBXW7 autoubiquitination and degradation. Phosphorylated by ATM at Ser-26 in response to DNA damage, promoting recruitment to DNA damage sites and 'Lys-63'-linked ubiquitination of phosphorylated XRCC4. In terms of processing, ubiquitinated: autoubiquitinates following phosphorylation at Thr-208 and subsequent interaction with PIN1. Ubiquitination leads to its proteasomal degradation. In terms of tissue distribution, widely expressed with highest levels in brain, heart and testis.

The protein localises to the nucleus. It localises to the nucleoplasm. The protein resides in the chromosome. Its pathway is protein modification; protein ubiquitination. In terms of biological role, substrate recognition component of a SCF (SKP1-CUL1-F-box protein) E3 ubiquitin-protein ligase complex which mediates the ubiquitination and subsequent proteasomal degradation of target proteins. Recognizes and binds phosphorylated sites/phosphodegrons within target proteins and thereafter brings them to the SCF complex for ubiquitination. Mediates ubiquitination and subsequent degradation of CCNE1 and MYC. Identified substrates include cyclin-E (CCNE1 or CCNE2), DISC1, JUN, MYC, NOTCH1 released notch intracellular domain (NICD), NOTCH2, MCL1, MLST8, RICTOR and probably PSEN1. Acts as a negative regulator of JNK signaling by binding to phosphorylated JUN and promoting its ubiquitination and subsequent degradation. SCF(FBXW7) complex mediates the ubiquitination and subsequent degradation of NFE2L1. Involved in bone homeostasis and negative regulation of osteoclast differentiation. Regulates the amplitude of the cyclic expression of hepatic core clock genes and genes involved in lipid and glucose metabolism via ubiquitination and proteasomal degradation of their transcriptional repressor NR1D1; CDK1-dependent phosphorylation of NR1D1 is necessary for SCF(FBXW7)-mediated ubiquitination. Also able to promote 'Lys-63'-linked ubiquitination in response to DNA damage. The SCF(FBXW7) complex facilitates double-strand break repair following phosphorylation by ATM: phosphorylation promotes localization to sites of double-strand breaks and 'Lys-63'-linked ubiquitination of phosphorylated XRCC4, enhancing DNA non-homologous end joining. This chain is F-box/WD repeat-containing protein 7, found in Mus musculus (Mouse).